Here is a 457-residue protein sequence, read N- to C-terminus: DDB1- and CUL4-associated factor 10 (457 aa).

4 WD repeats span residues Arg65 to Thr104, Ala108 to Cys146, Gly150 to Cys189, and Phe195 to Glu234. Residues Thr246–Pro265 show a composition bias toward low complexity. The segment at Thr246–Glu304 is disordered. Positions Arg281–Asn292 are enriched in polar residues. WD repeat units follow at residues Asp306 to Thr346, Val368 to Val406, and Ser424 to Phe457.

This sequence belongs to the WD repeat DCAF10 family.

It participates in protein modification; protein ubiquitination. May function as a substrate receptor for CUL4-DDB1 E3 ubiquitin-protein ligase complex. This is DDB1- and CUL4-associated factor 10 (dcaf10) from Xenopus laevis (African clawed frog).